A 236-amino-acid polypeptide reads, in one-letter code: Elastase-1 (236 aa).

The region spanning 1–236 (VVGGRVAQPN…AYISWMNGIM (236 aa)) is the Peptidase S1 domain. An intrachain disulfide couples Cys-30 to Cys-46. Residue His-45 is the Charge relay system of the active site. Positions 59, 61, 64, 66, and 69 each coordinate Ca(2+). The active-site Charge relay system is Asp-93. Cystine bridges form between Cys-127-Cys-193, Cys-158-Cys-174, and Cys-183-Cys-213. Ser-187 (charge relay system) is an active-site residue.

This sequence belongs to the peptidase S1 family. Elastase subfamily. Requires Ca(2+) as cofactor. In terms of tissue distribution, pancreas.

Its subcellular location is the secreted. The catalysed reaction is Hydrolysis of proteins, including elastin. Preferential cleavage: Ala-|-Xaa.. In terms of biological role, acts upon elastin. This Salmo salar (Atlantic salmon) protein is Elastase-1.